The sequence spans 77 residues: Secapin (77 aa).

The N-terminal stretch at 1–32 (MKNYSKNATHLITVLLFSFVVILLIIPSKCEA) is a signal peptide. A propeptide spanning residues 33–52 (VSNDMQPLEARSADLIPEPR) is cleaved from the precursor. Cysteines 61 and 72 form a disulfide.

Belongs to the secapin family. Expressed by the venom gland.

The protein resides in the secreted. In terms of biological role, nontoxic peptide. The polypeptide is Secapin (Vespa velutina nigrithorax (Hornet)).